We begin with the raw amino-acid sequence, 203 residues long: Urease accessory protein UreG (203 aa).

Gly-14 to Thr-21 is a GTP binding site.

It belongs to the SIMIBI class G3E GTPase family. UreG subfamily. In terms of assembly, homodimer. UreD, UreF and UreG form a complex that acts as a GTP-hydrolysis-dependent molecular chaperone, activating the urease apoprotein by helping to assemble the nickel containing metallocenter of UreC. The UreE protein probably delivers the nickel.

The protein localises to the cytoplasm. Functionally, facilitates the functional incorporation of the urease nickel metallocenter. This process requires GTP hydrolysis, probably effectuated by UreG. The chain is Urease accessory protein UreG from Sinorhizobium fredii (strain NBRC 101917 / NGR234).